The following is a 206-amino-acid chain: Shieldin complex subunit 1 (206 aa).

The interval 27–94 is disordered; it reads SSYEASQRVS…GQLETNEEED (68 aa). Over residues 32-55 the composition is skewed to low complexity; sequence SQRVSQGSSNSLSSLESHPFLSSS. Over residues 56-74 the composition is skewed to polar residues; that stretch reads TTDPDSNSLNTEQKGSWDS.

As to quaternary structure, component of the shieldin complex, consisting of SHLD1, SHLD2, SHLD3 and MAD2L2/REV7. Within the complex, SHLD2 forms a scaffold which interacts with a SHLD3-MAD2L2 subcomplex via its N-terminus, and with SHLD1 via its C-terminus. Interacts with ASTE1.

It is found in the chromosome. Functionally, component of the shieldin complex, which plays an important role in repair of DNA double-stranded breaks (DSBs). During G1 and S phase of the cell cycle, the complex functions downstream of TP53BP1 to promote non-homologous end joining (NHEJ) and suppress DNA end resection. Mediates various NHEJ-dependent processes including immunoglobulin class-switch recombination, and fusion of unprotected telomeres. This is Shieldin complex subunit 1 from Mus musculus (Mouse).